A 144-amino-acid chain; its full sequence is SsrA-binding protein (144 aa).

The protein belongs to the SmpB family.

The protein localises to the cytoplasm. Functionally, required for rescue of stalled ribosomes mediated by trans-translation. Binds to transfer-messenger RNA (tmRNA), required for stable association of tmRNA with ribosomes. tmRNA and SmpB together mimic tRNA shape, replacing the anticodon stem-loop with SmpB. tmRNA is encoded by the ssrA gene; the 2 termini fold to resemble tRNA(Ala) and it encodes a 'tag peptide', a short internal open reading frame. During trans-translation Ala-aminoacylated tmRNA acts like a tRNA, entering the A-site of stalled ribosomes, displacing the stalled mRNA. The ribosome then switches to translate the ORF on the tmRNA; the nascent peptide is terminated with the 'tag peptide' encoded by the tmRNA and targeted for degradation. The ribosome is freed to recommence translation, which seems to be the essential function of trans-translation. This chain is SsrA-binding protein, found in Thermus thermophilus (strain ATCC BAA-163 / DSM 7039 / HB27).